The following is a 459-amino-acid chain: Interleukin-7 receptor subunit alpha (459 aa).

An N-terminal signal peptide occupies residues M1–G20. Residues E21 to D239 lie on the Extracellular side of the membrane. A disulfide bond links C42 and C57. Residue N60 is glycosylated (N-linked (GlcNAc...) asparagine). Disulfide bonds link C74/C82 and C108/C118. Residues N115 and N177 are each glycosylated (N-linked (GlcNAc...) asparagine). In terms of domain architecture, Fibronectin type-III spans A131–P232. The WSXWS motif signature appears at W218 to S222. Residues P240–W264 traverse the membrane as a helical segment. The Cytoplasmic segment spans residues K265 to K459. The short motif at V272–K280 is the Box 1 motif element. T282 carries the phosphothreonine; by PKC modification. Disordered regions lie at residues T337 to S365 and N378 to V413. Over residues A347–P357 the composition is skewed to polar residues. Over residues P388–R397 the composition is skewed to basic and acidic residues.

Belongs to the type I cytokine receptor family. Type 4 subfamily. In terms of assembly, the IL7 receptor is a heterodimer of IL7R and IL2RG. The TSLP receptor is a heterodimer of CRLF2 and IL7R. Interacts with CD53. N-glycosylated IL-7Ralpha binds IL7 300-fold more tightly than the unglycosylated form. Post-translationally, ubiquitinated by MARCHF8; leading to lysosomal degradation. In terms of tissue distribution, spleen, thymus and fetal liver.

The protein localises to the membrane. Its function is as follows. Receptor for interleukin-7. Also acts as a receptor for thymic stromal lymphopoietin (TSLP). This chain is Interleukin-7 receptor subunit alpha (Il7r), found in Mus musculus (Mouse).